A 365-amino-acid polypeptide reads, in one-letter code: AP2/ERF and B3 domain-containing protein Os01g0141000 (365 aa).

The tract at residues 1–24 (MGVVSFSSTSSGASTATTESGGAV) is disordered. Residues 68–123 (RYKGVVPQPNGRWGAQIYERHARVWLGTFPDEEAAARAYDVAALRYRGRDAATNFP) constitute a DNA-binding region (AP2/ERF). The segment at residues 182-294 (FEKAVTPSDV…KLLFIDCKKN (113 aa)) is a DNA-binding region (TF-B3).

It localises to the nucleus. The protein is AP2/ERF and B3 domain-containing protein Os01g0141000 of Oryza sativa subsp. japonica (Rice).